Consider the following 452-residue polypeptide: MTGVTGTEDTKVIESKINELNIDKSKPEKTNKVNKSDDVDNDDVDNDDNDDEDNDDDDDEITESGNSASSSGDKKKKKNKNKNKKKKKKKIISIDSSYPEGIFPEGQWMEYPLEDINSYRITSEEKRYLDRQQNNKWQDFRKGAEIHRRVRHKAQSSIKPGMTMIEIANLIEDSIRNYSNNDHTLKSGIGFPTGLSLNHVAAHYTPNTGDKLILKKDDIMKVDIGIHVNGRICDSAFTMTFNDEGKYDNIMKAVKEATYTGIKESGIDVRLNDIGAAIQEVMESYEMEENGKIYPIKCIKNLNGHNIDDFIIHSGKSVPIIANGDMTKMEEGEIFAIETFGSTGNGYVLPEGECSHYAMNKNIQHLKPPSERSKQLLESIKQNFGTLPWCRRYLERTGEEKYLFALNQLVRHGIIEEYPPIVDKRGSYTAQYEHTILLHPHKKEVVTKGDDY.

The tract at residues 1–91 is disordered; that stretch reads MTGVTGTEDT…KNKKKKKKKI (91 aa). The span at 8 to 38 shows a compositional bias: basic and acidic residues; the sequence is EDTKVIESKINELNIDKSKPEKTNKVNKSDD. The segment covering 39–62 has biased composition (acidic residues); it reads VDNDDVDNDDNDDEDNDDDDDEIT. The span at 74–91 shows a compositional bias: basic residues; sequence KKKKKNKNKNKKKKKKKI. Residue H203 coordinates substrate. A divalent metal cation contacts are provided by D223, D234, and H305. Residue H313 coordinates substrate. The a divalent metal cation site is built by E338 and E433.

Belongs to the peptidase M24A family. Methionine aminopeptidase eukaryotic type 2 subfamily. Co(2+) serves as cofactor. The cofactor is Zn(2+). Mn(2+) is required as a cofactor. Requires Fe(2+) as cofactor.

It is found in the cytoplasm. It carries out the reaction Release of N-terminal amino acids, preferentially methionine, from peptides and arylamides.. Its function is as follows. Cotranslationally removes the N-terminal methionine from nascent proteins. The N-terminal methionine is often cleaved when the second residue in the primary sequence is small and uncharged (Met-Ala-, Cys, Gly, Pro, Ser, Thr, or Val). The polypeptide is Methionine aminopeptidase 2 (Candida dubliniensis (strain CD36 / ATCC MYA-646 / CBS 7987 / NCPF 3949 / NRRL Y-17841) (Yeast)).